A 287-amino-acid chain; its full sequence is Large ribosomal subunit protein uL2 (287 aa).

The tract at residues 216–287 is disordered; sequence RRPEVRGSVM…SKRGRGGRDA (72 aa). Over residues 271 to 287 the composition is skewed to basic residues; the sequence is QRRRRKSSKRGRGGRDA.

This sequence belongs to the universal ribosomal protein uL2 family. As to quaternary structure, part of the 50S ribosomal subunit. Forms a bridge to the 30S subunit in the 70S ribosome.

One of the primary rRNA binding proteins. Required for association of the 30S and 50S subunits to form the 70S ribosome, for tRNA binding and peptide bond formation. It has been suggested to have peptidyltransferase activity; this is somewhat controversial. Makes several contacts with the 16S rRNA in the 70S ribosome. This is Large ribosomal subunit protein uL2 from Synechococcus sp. (strain ATCC 27144 / PCC 6301 / SAUG 1402/1) (Anacystis nidulans).